A 121-amino-acid chain; its full sequence is Large ribosomal subunit protein uL14c (121 aa).

The protein belongs to the universal ribosomal protein uL14 family. Part of the 50S ribosomal subunit.

Its subcellular location is the plastid. The protein resides in the chloroplast. Functionally, binds to 23S rRNA. This Thalassiosira pseudonana (Marine diatom) protein is Large ribosomal subunit protein uL14c.